The primary structure comprises 334 residues: Malate dehydrogenase, cytoplasmic (334 aa).

An N-acetylserine modification is found at Ser-2. NAD(+)-binding positions include 11 to 17 and Asp-42; that span reads GAAGQIA. Arg-92 and Arg-98 together coordinate substrate. Asn-105 contacts NAD(+). At Lys-110 the chain carries N6-succinyllysine. Gln-112 contributes to the NAD(+) binding site. Residues Lys-118 and Lys-121 each carry the N6-acetyllysine modification. Residue 129–131 participates in NAD(+) binding; sequence VGN. Residues Asn-131 and Arg-162 each contribute to the substrate site. Catalysis depends on His-187, which acts as the Proton acceptor. At Lys-214 the chain carries N6-succinyllysine. Ser-217 is subject to Phosphoserine. Position 230 is an omega-N-methylarginine (Arg-230). Ser-241 bears the Phosphoserine mark. Lys-298 is subject to N6-acetyllysine; alternate. Residue Lys-298 is modified to N6-succinyllysine; alternate. Ser-309 is subject to Phosphoserine. Position 318 is an N6-succinyllysine (Lys-318). Phosphoserine is present on residues Ser-332 and Ser-333.

This sequence belongs to the LDH/MDH superfamily. MDH type 2 family. As to quaternary structure, homodimer. Post-translationally, ISGylated. In terms of processing, acetylation at Lys-118 dramatically enhances enzymatic activity and promotes adipogenic differentiation.

It is found in the cytoplasm. It localises to the cytosol. It carries out the reaction (S)-malate + NAD(+) = oxaloacetate + NADH + H(+). The enzyme catalyses (2R)-2-hydroxy-3-(4-hydroxyphenyl)propanoate + NAD(+) = 3-(4-hydroxyphenyl)pyruvate + NADH + H(+). The catalysed reaction is (S)-2-hydroxyglutarate + NAD(+) = 2-oxoglutarate + NADH + H(+). Catalyzes the reduction of aromatic alpha-keto acids in the presence of NADH. Plays essential roles in the malate-aspartate shuttle and the tricarboxylic acid cycle, important in mitochondrial NADH supply for oxidative phosphorylation. Catalyzes the reduction of 2-oxoglutarate to 2-hydroxyglutarate, leading to elevated reactive oxygen species (ROS). In Rattus norvegicus (Rat), this protein is Malate dehydrogenase, cytoplasmic (Mdh1).